The sequence spans 409 residues: Serine/threonine transporter SstT (409 aa).

Helical transmembrane passes span 24–44, 48–68, 82–102, 142–162, 194–214, 218–238, 292–312, and 319–339; these read LALG…AGLF, FVGA…AATI, IIVL…IAGM, AIAN…GAAL, LGIF…ALAG, LLAV…PAIV, IPLG…VLAM, and GITV…VSAC.

Belongs to the dicarboxylate/amino acid:cation symporter (DAACS) (TC 2.A.23) family.

It localises to the cell inner membrane. The enzyme catalyses L-serine(in) + Na(+)(in) = L-serine(out) + Na(+)(out). It catalyses the reaction L-threonine(in) + Na(+)(in) = L-threonine(out) + Na(+)(out). Its function is as follows. Involved in the import of serine and threonine into the cell, with the concomitant import of sodium (symport system). This Neisseria meningitidis serogroup B (strain ATCC BAA-335 / MC58) protein is Serine/threonine transporter SstT.